A 137-amino-acid polypeptide reads, in one-letter code: Large ribosomal subunit protein uL16 (137 aa).

It belongs to the universal ribosomal protein uL16 family. In terms of assembly, part of the 50S ribosomal subunit.

Binds 23S rRNA and is also seen to make contacts with the A and possibly P site tRNAs. The sequence is that of Large ribosomal subunit protein uL16 from Pseudomonas paraeruginosa (strain DSM 24068 / PA7) (Pseudomonas aeruginosa (strain PA7)).